The primary structure comprises 73 residues: Carboxysome shell vertex protein CsoS4B (73 aa).

The BMV domain maps to 1–68 (MVCTQRVAGL…TDLTIGGIID (68 aa)).

It belongs to the CcmL/EutN family. CsoS4 subfamily. In terms of assembly, homopentamer.

It localises to the carboxysome. In terms of biological role, probably forms vertices in the carboxysome, a polyhedral inclusion where RuBisCO (ribulose bisphosphate carboxylase, cbbL-cbbS) is sequestered. Has been modeled to induce curvature upon insertion into an otherwise flat hexagonal layer of major carboxysome subunits. Has not been identified in purified carboxysomes; it is expected to be present in very low amounts. This Prochlorococcus marinus subsp. pastoris (strain CCMP1986 / NIES-2087 / MED4) protein is Carboxysome shell vertex protein CsoS4B.